Here is a 581-residue protein sequence, read N- to C-terminus: Chaperonin GroEL 1 (581 aa).

ATP is bound by residues 29–32, 86–90, G413, and D492; these read TIGP and DGTTT.

Belongs to the chaperonin (HSP60) family. As to quaternary structure, forms a cylinder of 14 subunits composed of two heptameric rings stacked back-to-back. Interacts with the co-chaperonin GroES.

The protein localises to the cytoplasm. The enzyme catalyses ATP + H2O + a folded polypeptide = ADP + phosphate + an unfolded polypeptide.. Functionally, together with its co-chaperonin GroES, plays an essential role in assisting protein folding. The GroEL-GroES system forms a nano-cage that allows encapsulation of the non-native substrate proteins and provides a physical environment optimized to promote and accelerate protein folding. The polypeptide is Chaperonin GroEL 1 (Prochlorococcus marinus subsp. pastoris (strain CCMP1986 / NIES-2087 / MED4)).